A 450-amino-acid polypeptide reads, in one-letter code: SAGA complex/transcription factor TFIID complex subunit Taf12 (450 aa).

Composition is skewed to polar residues over residues 1 to 10 (MNGQHSSPGT), 19 to 29 (PVNQAQFSQQR), and 190 to 212 (QNRQASSANGNNTGTSTPVNAST). Disordered regions lie at residues 1-29 (MNGQHSSPGTPVQRPSAGPVNQAQFSQQR) and 190-281 (QNRQ…VEKS). Residues 217 to 236 (STASTPQLQQTQAQANAPQQ) show a composition bias toward low complexity. Composition is skewed to polar residues over residues 237–246 (RINPETSSVP) and 255–281 (ANVSNESTELATSATQQSGLANNVEKS). Serine 297 is subject to Phosphoserine. The region spanning 338 to 413 (NGNRLLSKRK…HLERNWNIRL (76 aa)) is the Histone-fold domain. The disordered stretch occupies residues 426–450 (RKTGPTPSYQQKQNAIGTAKSLNKD). Over residues 430 to 441 (PTPSYQQKQNAI) the composition is skewed to polar residues.

It belongs to the TAF12 family. In terms of assembly, component of the 1.8 MDa SAGA (Spt-Ada-Gcn5 acetyltransferase) complex, which is composed of 19 subunits tra1, spt7, taf5, ngg1/ada3, sgf73, spt20, spt8, taf12, taf6, hfi1/ada1, ubp8, gcn5, ada2, spt3, sgf29, taf10, taf9, sgf11 and sus1. The SAGA complex is composed of 4 modules, namely the HAT (histone acetyltransferase) module (gcn5, ada2, ngg1/ada3 and sgf29), the DUB (deubiquitinating) module (ubp8, sgf11, sgf73 and sus1), the core or TAF (TBP-associated factor) module (taf5, taf6, taf9, taf10 and taf12), and the Tra1 or SPT (Suppressor of Ty) module (tra1, hfi1/ada1, spt3, spt7, spt8 and spt20). The Tra1/SPT module binds activators, the core module recruits TBP (TATA-binding protein), the HAT module contains the histone H3 acetyltransferase gcn5, and the DUB module comprises the histone H2B deubiquitinase ubp8. Component of the 1.2 MDa TFIID complex, which is composed of TATA-binding protein (TBP) and the 14 TBP-associated factors (TAFs). It comprises 1 copy of each taf1, taf2, taf3, taf7, taf8, taf11, taf13, 2 copies of each taf4, taf5, taf6, taf9, taf10, taf12, and 3 copies of taf14. In TFIID, taf12 heterodimerizes with taf4, forming ultimately an octamer consisting of a taf6-taf9 heterotetramer core flanked by taf4-taf12 dimers on either side, similar to the histone H2A-H2B-H3-H4 octamer.

It is found in the nucleus. Functions as a component of both the DNA-binding general transcription initiation factor complex TFIID and the transcription coactivator SAGA complex. Binding of TFIID to a promoter (with or without TATA element) is the initial step in pre-initiation complex (PIC) formation. TFIID plays a key role in the regulation of gene expression by RNA polymerase II through different activities such as transcription activator interaction, core promoter recognition and selectivity, TFIIA and TFIIB interaction, chromatin modification (histone acetylation by TAF1), facilitation of DNA opening and initiation of transcription. SAGA acts as a general cofactor required for essentially all RNA polymerase II transcription. At the promoters, SAGA is required for transcription pre-initiation complex (PIC) recruitment. It influences RNA polymerase II transcriptional activity through different activities such as TBP interaction (via core/TAF module) and promoter selectivity, interaction with transcription activators (via Tra1/SPT module), and chromatin modification through histone acetylation (via HAT module) and deubiquitination (via DUB module). SAGA preferentially acetylates histones H3 (to form H3K9ac, H3K14ac, H3K18ac and H3K23ac) and H2B and deubiquitinates histone H2B. SAGA interacts with DNA via upstream activating sequences (UASs). In Schizosaccharomyces pombe (strain 972 / ATCC 24843) (Fission yeast), this protein is SAGA complex/transcription factor TFIID complex subunit Taf12.